The following is a 295-amino-acid chain: Host-inducible protein A (295 aa).

Positions 1-20 are disordered; that stretch reads MHLDRSDSNGGSSRYTLDHE.

The protein belongs to the NopP family.

The polypeptide is Host-inducible protein A (Rhizobium fredii (Sinorhizobium fredii)).